The primary structure comprises 404 residues: Argininosuccinate synthase (404 aa).

ATP is bound by residues 10-18 (AYSGGLDTS) and Ala37. 2 residues coordinate L-citrulline: Tyr90 and Ser95. Gly120 is an ATP binding site. The L-aspartate site is built by Thr122, Asn126, and Asp127. Position 126 (Asn126) interacts with L-citrulline. L-citrulline contacts are provided by Arg130, Ser181, Ser190, Glu266, and Tyr278.

Belongs to the argininosuccinate synthase family. Type 1 subfamily. Homotetramer.

It is found in the cytoplasm. The catalysed reaction is L-citrulline + L-aspartate + ATP = 2-(N(omega)-L-arginino)succinate + AMP + diphosphate + H(+). It participates in amino-acid biosynthesis; L-arginine biosynthesis; L-arginine from L-ornithine and carbamoyl phosphate: step 2/3. The sequence is that of Argininosuccinate synthase from Erythrobacter litoralis (strain HTCC2594).